The primary structure comprises 276 residues: Undecaprenyl-diphosphatase (276 aa).

5 helical membrane-spanning segments follow: residues 85–105, 108–128, 187–207, 217–237, and 253–273; these read MNVV…EKTI, VLFA…AILW, VATE…TLYE, VDSV…AFAC, and FAWY…SGWI.

Belongs to the UppP family.

Its subcellular location is the cell inner membrane. It carries out the reaction di-trans,octa-cis-undecaprenyl diphosphate + H2O = di-trans,octa-cis-undecaprenyl phosphate + phosphate + H(+). Catalyzes the dephosphorylation of undecaprenyl diphosphate (UPP). Confers resistance to bacitracin. This is Undecaprenyl-diphosphatase from Burkholderia mallei (strain NCTC 10247).